Reading from the N-terminus, the 331-residue chain is Olfactory receptor 6B3 (331 aa).

The Extracellular portion of the chain corresponds to 1 to 25 (MSGENVTRVGTFILVGFPTAPGLQY). A glycan (N-linked (GlcNAc...) asparagine) is linked at asparagine 5. Residues 26–46 (LLFLLFLLTYLFVLVENLAII) form a helical membrane-spanning segment. At 47-54 (LTVWSSTS) the chain is on the cytoplasmic side. A helical transmembrane segment spans residues 55-75 (LHRPMYYFLSSMSFLEIWYVS). Topologically, residues 76 to 99 (DITPKMLEGFLLQQKRISFVGCMT) are extracellular. Residues cysteine 97 and cysteine 189 are joined by a disulfide bond. A helical membrane pass occupies residues 100–120 (QLYFFSSLVCTECVLLASMAY). Residues 121-139 (DRYVAICHPLRYHVLVTPG) lie on the Cytoplasmic side of the membrane. A helical transmembrane segment spans residues 140-160 (LCLQLVGFSFVSGFTISMIKV). Over 161–196 (CFISSVTFCGSNVLNHFFCDISPILKLACTDFSTAE) the chain is Extracellular. Residues 197–217 (LVDFILAFIILVFPLLATMLS) form a helical membrane-spanning segment. The Cytoplasmic portion of the chain corresponds to 218–237 (YAHITLAVLRIPSATGCWRA). A helical membrane pass occupies residues 238–258 (FFTCASHLTVVTVFYTALLFM). Residues 259 to 271 (YVRPQAIDSRSSN) are Extracellular-facing. Residues 272-292 (KLISVLYTVITPILNPLIYCL) traverse the membrane as a helical segment. Over 293–331 (RNKEFKNALKKAFGLTSCAVEGRLSSLLELHLQIHSQPL) the chain is Cytoplasmic.

This sequence belongs to the G-protein coupled receptor 1 family.

The protein resides in the cell membrane. Odorant receptor. This chain is Olfactory receptor 6B3 (OR6B3), found in Homo sapiens (Human).